Here is a 148-residue protein sequence, read N- to C-terminus: Large ribosomal subunit protein bL9 (148 aa).

The protein belongs to the bacterial ribosomal protein bL9 family.

In terms of biological role, binds to the 23S rRNA. In Hahella chejuensis (strain KCTC 2396), this protein is Large ribosomal subunit protein bL9.